The primary structure comprises 399 residues: Succinate--CoA ligase [ADP-forming] subunit beta (399 aa).

The ATP-grasp domain maps to 9–254; the sequence is KAVLAEFGAP…ESEEDPKEIE (246 aa). Residues Lys46, 53–55, Glu109, Ala112, and Glu117 contribute to the ATP site; that span reads GRG. Asn209 and Asp223 together coordinate Mg(2+). Substrate-binding positions include Asn274 and 331–333; that span reads GIM.

Belongs to the succinate/malate CoA ligase beta subunit family. In terms of assembly, heterotetramer of two alpha and two beta subunits. It depends on Mg(2+) as a cofactor.

The catalysed reaction is succinate + ATP + CoA = succinyl-CoA + ADP + phosphate. It carries out the reaction GTP + succinate + CoA = succinyl-CoA + GDP + phosphate. It participates in carbohydrate metabolism; tricarboxylic acid cycle; succinate from succinyl-CoA (ligase route): step 1/1. Functionally, succinyl-CoA synthetase functions in the citric acid cycle (TCA), coupling the hydrolysis of succinyl-CoA to the synthesis of either ATP or GTP and thus represents the only step of substrate-level phosphorylation in the TCA. The beta subunit provides nucleotide specificity of the enzyme and binds the substrate succinate, while the binding sites for coenzyme A and phosphate are found in the alpha subunit. The protein is Succinate--CoA ligase [ADP-forming] subunit beta of Caulobacter vibrioides (strain NA1000 / CB15N) (Caulobacter crescentus).